The following is a 463-amino-acid chain: Thiamine-repressible acid phosphatase SPBC21H7.03c (463 aa).

The N-terminal stretch at 1–18 is a signal peptide; that stretch reads MQLCIISLWFLAAFIVNA. Residue H69 is the Nucleophile of the active site. N98, N104, N221, and N324 each carry an N-linked (GlcNAc...) asparagine glycan. D341 (proton donor) is an active-site residue. N439 and N458 each carry an N-linked (GlcNAc...) asparagine glycan.

This sequence belongs to the histidine acid phosphatase family.

The protein resides in the secreted. The protein localises to the cell wall. The catalysed reaction is a phosphate monoester + H2O = an alcohol + phosphate. In terms of biological role, may dephosphorylate thiamine phosphates. The protein is Thiamine-repressible acid phosphatase SPBC21H7.03c of Schizosaccharomyces pombe (strain 972 / ATCC 24843) (Fission yeast).